The chain runs to 336 residues: Phosphate acyltransferase (336 aa).

The protein belongs to the PlsX family. Homodimer. Probably interacts with PlsY.

It is found in the cytoplasm. The catalysed reaction is a fatty acyl-[ACP] + phosphate = an acyl phosphate + holo-[ACP]. Its pathway is lipid metabolism; phospholipid metabolism. Functionally, catalyzes the reversible formation of acyl-phosphate (acyl-PO(4)) from acyl-[acyl-carrier-protein] (acyl-ACP). This enzyme utilizes acyl-ACP as fatty acyl donor, but not acyl-CoA. This Pseudomonas paraeruginosa (strain DSM 24068 / PA7) (Pseudomonas aeruginosa (strain PA7)) protein is Phosphate acyltransferase.